Consider the following 459-residue polypeptide: uncharacterized protein (459 aa).

Helical transmembrane passes span 53-75 (IPLLPVLALSVGALTVLGQGLTL) and 111-133 (ARIARVLLLVAGVFTLVIVCLCA). Residues 174-196 (HLDNPSAPHPSENPQSRAHPKQN) are disordered.

It localises to the cell membrane. This is an uncharacterized protein from Treponema pallidum (strain Nichols).